Consider the following 185-residue polypeptide: Ribosome-recycling factor (185 aa).

The protein belongs to the RRF family.

It localises to the cytoplasm. In terms of biological role, responsible for the release of ribosomes from messenger RNA at the termination of protein biosynthesis. May increase the efficiency of translation by recycling ribosomes from one round of translation to another. In Legionella pneumophila (strain Paris), this protein is Ribosome-recycling factor.